A 282-amino-acid chain; its full sequence is U1 small nuclear ribonucleoprotein A (282 aa).

2 RRM domains span residues 10–89 and 208–282; these read NTIY…YSKT and HILF…FAKK.

It belongs to the RRM U1 A/B'' family. As to quaternary structure, U1 snRNP is composed of the 7 core Sm proteins snrpb, snrpd1, snrpd2, snrpd3, snrpe, snrpf and snrpg that assemble in a heptameric protein ring on the Sm site of the small nuclear RNA to form the core snRNP, and at least three U1 snRNP-specific proteins snrnp70/U1-70K, snrpa/U1-A and snrpc/U1-C.

It is found in the nucleus. In terms of biological role, component of the spliceosomal U1 snRNP, which is essential for recognition of the pre-mRNA 5' splice-site and the subsequent assembly of the spliceosome. U1 snRNP is the first snRNP to interact with pre-mRNA. This interaction is required for the subsequent binding of U2 snRNP and the U4/U6/U5 tri-snRNP. Snrpa binds stem loop II of U1 snRNA. The polypeptide is U1 small nuclear ribonucleoprotein A (snrpa) (Xenopus laevis (African clawed frog)).